A 278-amino-acid polypeptide reads, in one-letter code: Tryptophan synthase alpha chain (278 aa).

Residues glutamate 50 and aspartate 61 each act as proton acceptor in the active site.

It belongs to the TrpA family. As to quaternary structure, tetramer of two alpha and two beta chains.

It carries out the reaction (1S,2R)-1-C-(indol-3-yl)glycerol 3-phosphate + L-serine = D-glyceraldehyde 3-phosphate + L-tryptophan + H2O. It participates in amino-acid biosynthesis; L-tryptophan biosynthesis; L-tryptophan from chorismate: step 5/5. Functionally, the alpha subunit is responsible for the aldol cleavage of indoleglycerol phosphate to indole and glyceraldehyde 3-phosphate. This Nitrobacter hamburgensis (strain DSM 10229 / NCIMB 13809 / X14) protein is Tryptophan synthase alpha chain.